The sequence spans 378 residues: Queuine tRNA-ribosyltransferase (378 aa).

The active-site Proton acceptor is D91. Substrate contacts are provided by residues 91-95 (DSGGF), D145, Q197, and G224. The active-site Nucleophile is D274. The segment at 279–283 (TRLAR) is RNA binding; important for wobble base 34 recognition. Residues C312, C314, C317, and H343 each coordinate Zn(2+).

It belongs to the queuine tRNA-ribosyltransferase family. In terms of assembly, homodimer. Within each dimer, one monomer is responsible for RNA recognition and catalysis, while the other monomer binds to the replacement base PreQ1. It depends on Zn(2+) as a cofactor.

It carries out the reaction 7-aminomethyl-7-carbaguanine + guanosine(34) in tRNA = 7-aminomethyl-7-carbaguanosine(34) in tRNA + guanine. The protein operates within tRNA modification; tRNA-queuosine biosynthesis. Catalyzes the base-exchange of a guanine (G) residue with the queuine precursor 7-aminomethyl-7-deazaguanine (PreQ1) at position 34 (anticodon wobble position) in tRNAs with GU(N) anticodons (tRNA-Asp, -Asn, -His and -Tyr). Catalysis occurs through a double-displacement mechanism. The nucleophile active site attacks the C1' of nucleotide 34 to detach the guanine base from the RNA, forming a covalent enzyme-RNA intermediate. The proton acceptor active site deprotonates the incoming PreQ1, allowing a nucleophilic attack on the C1' of the ribose to form the product. After dissociation, two additional enzymatic reactions on the tRNA convert PreQ1 to queuine (Q), resulting in the hypermodified nucleoside queuosine (7-(((4,5-cis-dihydroxy-2-cyclopenten-1-yl)amino)methyl)-7-deazaguanosine). The protein is Queuine tRNA-ribosyltransferase of Methylacidiphilum infernorum (isolate V4) (Methylokorus infernorum (strain V4)).